A 158-amino-acid chain; its full sequence is SsrA-binding protein (158 aa).

Belongs to the SmpB family.

The protein localises to the cytoplasm. Functionally, required for rescue of stalled ribosomes mediated by trans-translation. Binds to transfer-messenger RNA (tmRNA), required for stable association of tmRNA with ribosomes. tmRNA and SmpB together mimic tRNA shape, replacing the anticodon stem-loop with SmpB. tmRNA is encoded by the ssrA gene; the 2 termini fold to resemble tRNA(Ala) and it encodes a 'tag peptide', a short internal open reading frame. During trans-translation Ala-aminoacylated tmRNA acts like a tRNA, entering the A-site of stalled ribosomes, displacing the stalled mRNA. The ribosome then switches to translate the ORF on the tmRNA; the nascent peptide is terminated with the 'tag peptide' encoded by the tmRNA and targeted for degradation. The ribosome is freed to recommence translation, which seems to be the essential function of trans-translation. This is SsrA-binding protein from Caldicellulosiruptor bescii (strain ATCC BAA-1888 / DSM 6725 / KCTC 15123 / Z-1320) (Anaerocellum thermophilum).